Reading from the N-terminus, the 558-residue chain is Alkaline/neutral invertase CINV2 (558 aa).

A phosphoserine mark is found at serine 16, serine 19, and serine 50. Threonine 79 carries the post-translational modification Phosphothreonine. Serine 555 is subject to Phosphoserine.

It belongs to the glycosyl hydrolase 100 family.

The protein resides in the cytoplasm. It is found in the cytosol. It carries out the reaction Hydrolysis of terminal non-reducing beta-D-fructofuranoside residues in beta-D-fructofuranosides.. Cytosolic invertase that may cleave sucrose into glucose and fructose, and that is involved in the regulation of root growth. May regulate sugar-mediated root development by controlling sucrose catabolism in root cells. In Arabidopsis thaliana (Mouse-ear cress), this protein is Alkaline/neutral invertase CINV2.